The sequence spans 120 residues: Accessory gland protein Acp53Ea (120 aa).

The first 23 residues, 1–23 (MKLIKVTLVFSLLALVFVAQTEA), serve as a signal peptide directing secretion.

As to expression, main cells of accessory gland and seminal fluid.

It is found in the secreted. Responsible for physiological and behavioral changes in mated female flies. In Drosophila melanogaster (Fruit fly), this protein is Accessory gland protein Acp53Ea (Acp53Ea).